An 888-amino-acid chain; its full sequence is Autotaxin (888 aa).

A signal peptide spans 1–27 (MARRRSCQLHQVISLFTFAVGVNICLG). A propeptide spans 28 to 35 (VTANRIKR) (removed by furin). An N-linked (GlcNAc...) asparagine glycan is attached at N54. 2 consecutive SMB domains span residues 55-98 (ISGS…LKTA) and 99-143 (GGWE…GESH). 10 disulfides stabilise this stretch: C59/C76, C63/C94, C74/C87, C80/C86, C103/C120, C108/C138, C118/C131, C124/C130, C149/C195, and C157/C351. The Cell attachment site signature appears at 127-129 (RGD). Positions 145–502 (VDDDCEEIKT…PTFKYKTKVP (358 aa)) are phosphodiesterase. The Zn(2+) site is built by D172 and T210. T210 functions as the Nucleophile in the catalytic mechanism. 1-(9Z-octadecenoyl)-sn-glycero-3-phosphate is bound by residues T210, N231, and D312. 1-hexadecanoyl-sn-glycero-3-phosphate contacts are provided by T210, N231, and D312. 3 residues coordinate 1-tetradecanoyl-sn-glycerol 3-phosphate: T210, N231, and D312. Residues D312, H316, D359, and H360 each coordinate Zn(2+). 5 disulfides stabilise this stretch: C367–C469, C414–C831, C567–C692, C569–C677, and C800–C810. N-linked (GlcNAc...) asparagine glycosylation occurs at N411. Zn(2+) is bound at residue H475. Residue H475 participates in 1-(9Z-octadecenoyl)-sn-glycero-3-phosphate binding. Position 475 (H475) interacts with 1-hexadecanoyl-sn-glycero-3-phosphate. Residue H475 participates in 1-tetradecanoyl-sn-glycerol 3-phosphate binding. N525 carries an N-linked (GlcNAc...) asparagine glycan. Residues 623-888 (LYGRPAVLYR…TYLQTYESEI (266 aa)) are nuclease-like domain. Positions 765, 767, 769, 771, and 773 each coordinate Ca(2+). N-linked (GlcNAc...) asparagine glycosylation is present at N832. The interval 855–876 (IEHLTSLDFFRKTSRSYPEILT) is required for secretion.

This sequence belongs to the nucleotide pyrophosphatase/phosphodiesterase family. The cofactor is Zn(2+). Ca(2+) is required as a cofactor. N-glycosylation, but not furin-cleavage, plays a critical role on secretion and on lysoPLD activity. In terms of processing, the interdomain disulfide bond between Cys-414 and Cys-831 is essential for catalytic activity. Detected in fetal serum (at protein level).

The protein resides in the secreted. The enzyme catalyses a 1-O-alkyl-sn-glycero-3-phosphoethanolamine + H2O = a 1-O-alkyl-sn-glycero-3-phosphate + ethanolamine + H(+). It catalyses the reaction a 1-acyl-sn-glycero-3-phosphoethanolamine + H2O = a 1-acyl-sn-glycero-3-phosphate + ethanolamine + H(+). The catalysed reaction is 1-(9Z-octadecenoyl)-sn-glycero-3-phosphoethanolamine + H2O = 1-(9Z-octadecenoyl)-sn-glycero-3-phosphate + ethanolamine + H(+). It carries out the reaction a 1-O-alkyl-sn-glycero-3-phosphocholine + H2O = a 1-O-alkyl-sn-glycero-3-phosphate + choline + H(+). The enzyme catalyses 1-O-(9Z-octadecenyl)-sn-glycero-3-phosphocholine + H2O = 1-O-(9Z-octadecenyl)-sn-glycero-3-phosphate + choline + H(+). It catalyses the reaction 1-O-hexadecyl-sn-glycero-3-phosphocholine + H2O = 1-O-hexadecyl-sn-glycero-3-phosphate + choline + H(+). The catalysed reaction is a 1-O-(1Z-alkenyl)-sn-glycero-3-phosphocholine + H2O = a 1-O-(1Z-alkenyl)-sn-glycero-3-phosphate + choline + H(+). It carries out the reaction a 1-acyl-sn-glycero-3-phosphocholine + H2O = a 1-acyl-sn-glycero-3-phosphate + choline + H(+). The enzyme catalyses 1-dodecanoyl-sn-glycero-3-phosphocholine + H2O = 1-dodecanoyl-sn-glycerol 3-phosphate + choline + H(+). It catalyses the reaction 1-(9Z-octadecenoyl)-sn-glycero-3-phosphocholine + H2O = 1-(9Z-octadecenoyl)-sn-glycero-3-phosphate + choline + H(+). The catalysed reaction is 1-tetradecanoyl-sn-glycero-3-phosphocholine + H2O = 1-tetradecanoyl-sn-glycerol 3-phosphate + choline + H(+). It carries out the reaction 1-decanoyl-sn-glycero-3-phosphocholine + H2O = 1-decanoyl-sn-glycero-3-phosphate + choline + H(+). The enzyme catalyses 1-octadecanoyl-sn-glycero-3-phosphocholine + H2O = 1-octadecanoyl-sn-glycero-3-phosphate + choline + H(+). It catalyses the reaction 1-hexadecanoyl-sn-glycero-3-phosphocholine + H2O = 1-hexadecanoyl-sn-glycero-3-phosphate + choline + H(+). The catalysed reaction is 1-hexanoyl-sn-glycero-3-phosphocholine + H2O = 1-hexanoyl-sn-glycero-3-phosphate + choline + H(+). It carries out the reaction 1-(9Z,12Z)-octadecadienoyl-sn-glycero-3-phosphocholine + H2O = 1-(9Z,12Z)-octadecadienoyl-sn-glycero-3-phosphate + choline + H(+). The enzyme catalyses sphing-4-enine-phosphocholine + H2O = sphing-4-enine 1-phosphate + choline + H(+). It catalyses the reaction 1-(5Z,8Z,11Z,14Z-eicosatetraenoyl)-sn-glycero-3-phosphocholine + H2O = 1-(5Z,8Z,11Z,14Z-eicosatetraenoyl)-sn-glycero-3-phosphate + choline + H(+). The catalysed reaction is a 2-acyl-sn-glycero-3-phosphocholine + H2O = a 2-acyl-sn-glycerol 3-phosphate + choline + H(+). It carries out the reaction a 1,2-diacyl-sn-glycero-3-phosphocholine + H2O = a 1,2-diacyl-sn-glycero-3-phosphate + choline + H(+). The enzyme catalyses 1,2-dioctanoyl-sn-glycero-3-phosphocholine + H2O = 1,2-dioctanoyl-sn-glycero-3-phosphate + choline + H(+). It catalyses the reaction 1,2-didecanoyl-sn-glycero-3-phosphocholine + H2O = 1,2-didecanoyl-sn-glycero-3-phosphate + choline + H(+). The catalysed reaction is a 1-acyl-sn-glycero-3-phospho-L-serine + H2O = a 1-acyl-sn-glycero-3-phosphate + L-serine + H(+). It carries out the reaction 1-(9Z-octadecenoyl)-sn-glycero-3-phospho-L-serine + H2O = 1-(9Z-octadecenoyl)-sn-glycero-3-phosphate + L-serine + H(+). The enzyme catalyses a 2-acyl-sn-glycero-3-phospho-L-serine + H2O = a 2-acyl-sn-glycerol 3-phosphate + L-serine + H(+). Functionally, secreted lysophospholipase D that hydrolyzes lysophospholipids to produce the signaling molecule lysophosphatidic acid (LPA) in extracellular fluids. Its major substrate is lysophosphatidylcholine. Can also act on sphingosylphosphorylcholine producing sphingosine-1-phosphate, a modulator of cell motility. Can hydrolyze, in vitro, bis-pNPP, to some extent pNP-TMP, and barely ATP. Involved in several motility-related processes such as angiogenesis and neurite outgrowth. Acts as an angiogenic factor by stimulating migration of smooth muscle cells and microtubule formation. Stimulates migration of melanoma cells, probably via a pertussis toxin-sensitive G protein. May have a role in induction of parturition. Possible involvement in cell proliferation and adipose tissue development. Required for LPA production in activated platelets, cleaves the sn-1 lysophospholipids to generate sn-1 lysophosphatidic acids containing predominantly 18:2 and 20:4 fatty acids. Shows a preference for the sn-1 to the sn-2 isomer of 1-O-alkyl-sn-glycero-3-phosphocholine (lyso-PAF). This is Autotaxin from Bos taurus (Bovine).